We begin with the raw amino-acid sequence, 331 residues long: C-type lectin domain family 4 member K (331 aa).

The Cytoplasmic portion of the chain corresponds to M1–K41. The helical; Signal-anchor for type II membrane protein transmembrane segment at P42 to L62 threads the bilayer. Residues Q63–E331 lie on the Extracellular side of the membrane. N-linked (GlcNAc...) asparagine glycans are attached at residues N90 and N116. Residues D106–M197 adopt a coiled-coil conformation. The 119-residue stretch at F205–K323 folds into the C-type lectin domain. 2 cysteine pairs are disulfide-bonded: C226/C322 and C298/C314.

Homotrimer. As to expression, expressed by Langerhans cells. Expressed in dendritic cells and by scattered cells in lymph nodes and spleen. Also detected in some non-lymphoid tissues such as lung, liver and heart.

The protein localises to the membrane. Functionally, calcium-dependent lectin displaying mannose-binding specificity. Induces the formation of Birbeck granules (BGs); is a potent regulator of membrane superimposition and zippering. Binds to sulfated as well as mannosylated glycans, keratan sulfate (KS) and beta-glucans. Facilitates uptake of antigens and is involved in the routing and/or processing of antigen for presentation to T cells. In Mus musculus (Mouse), this protein is C-type lectin domain family 4 member K (Cd207).